The chain runs to 435 residues: Serine--tRNA ligase (435 aa).

T242–E244 is an L-serine binding site. R273–E275 lines the ATP pocket. E296 is a binding site for L-serine. Residue E360–S363 participates in ATP binding. S396 contacts L-serine.

It belongs to the class-II aminoacyl-tRNA synthetase family. Type-1 seryl-tRNA synthetase subfamily. In terms of assembly, homodimer. The tRNA molecule binds across the dimer.

It is found in the cytoplasm. It carries out the reaction tRNA(Ser) + L-serine + ATP = L-seryl-tRNA(Ser) + AMP + diphosphate + H(+). The enzyme catalyses tRNA(Sec) + L-serine + ATP = L-seryl-tRNA(Sec) + AMP + diphosphate + H(+). Its pathway is aminoacyl-tRNA biosynthesis; selenocysteinyl-tRNA(Sec) biosynthesis; L-seryl-tRNA(Sec) from L-serine and tRNA(Sec): step 1/1. Its function is as follows. Catalyzes the attachment of serine to tRNA(Ser). Is also able to aminoacylate tRNA(Sec) with serine, to form the misacylated tRNA L-seryl-tRNA(Sec), which will be further converted into selenocysteinyl-tRNA(Sec). The protein is Serine--tRNA ligase of Aliivibrio salmonicida (strain LFI1238) (Vibrio salmonicida (strain LFI1238)).